The chain runs to 321 residues: Probable arabinan endo-1,5-alpha-L-arabinosidase A (321 aa).

The N-terminal stretch at 1–19 (MHPSTFVTTIACLAGLAHG) is a signal peptide. The active-site Proton acceptor is the Asp-34. The active-site Proton donor is Glu-200.

This sequence belongs to the glycosyl hydrolase 43 family.

It localises to the secreted. The enzyme catalyses Endohydrolysis of (1-&gt;5)-alpha-arabinofuranosidic linkages in (1-&gt;5)-arabinans.. Its pathway is glycan metabolism; L-arabinan degradation. Functionally, endo-1,5-alpha-L-arabinanase involved in degradation of pectin. Its preferred substrate is linear 1,5-alpha-L-arabinan. The sequence is that of Probable arabinan endo-1,5-alpha-L-arabinosidase A (abnA) from Aspergillus clavatus (strain ATCC 1007 / CBS 513.65 / DSM 816 / NCTC 3887 / NRRL 1 / QM 1276 / 107).